A 385-amino-acid polypeptide reads, in one-letter code: Uroporphyrinogen decarboxylase (385 aa).

Substrate contacts are provided by residues 53–57 (RQAGR), aspartate 102, tyrosine 179, serine 234, and histidine 363.

Belongs to the uroporphyrinogen decarboxylase family. In terms of assembly, homodimer.

It localises to the cytoplasm. It catalyses the reaction uroporphyrinogen III + 4 H(+) = coproporphyrinogen III + 4 CO2. The protein operates within porphyrin-containing compound metabolism; protoporphyrin-IX biosynthesis; coproporphyrinogen-III from 5-aminolevulinate: step 4/4. Its function is as follows. Catalyzes the decarboxylation of four acetate groups of uroporphyrinogen-III to yield coproporphyrinogen-III. This Tropheryma whipplei (strain TW08/27) (Whipple's bacillus) protein is Uroporphyrinogen decarboxylase.